The chain runs to 339 residues: Dihydroorotate dehydrogenase (quinone) (339 aa).

Residues 62–66 and Thr-86 each bind FMN; that span reads AGMDK. Lys-66 provides a ligand contact to substrate. Substrate is bound at residue 111–115; the sequence is NRMGF. The FMN site is built by Asn-139 and Asn-172. A substrate-binding site is contributed by Asn-172. Catalysis depends on Ser-175, which acts as the Nucleophile. Asn-177 contacts substrate. FMN-binding residues include Lys-217 and Thr-245. 246–247 contacts substrate; that stretch reads NT. Residues Gly-268, Gly-297, and 318 to 319 contribute to the FMN site; that span reads YS.

Belongs to the dihydroorotate dehydrogenase family. Type 2 subfamily. Monomer. FMN is required as a cofactor.

The protein resides in the cell membrane. The catalysed reaction is (S)-dihydroorotate + a quinone = orotate + a quinol. It participates in pyrimidine metabolism; UMP biosynthesis via de novo pathway; orotate from (S)-dihydroorotate (quinone route): step 1/1. Catalyzes the conversion of dihydroorotate to orotate with quinone as electron acceptor. In Shewanella oneidensis (strain ATCC 700550 / JCM 31522 / CIP 106686 / LMG 19005 / NCIMB 14063 / MR-1), this protein is Dihydroorotate dehydrogenase (quinone).